The primary structure comprises 224 residues: Pyridoxine/pyridoxamine 5'-phosphate oxidase (224 aa).

Residues 19–22 and K81 contribute to the substrate site; that span reads RGEY. Residues 76-81, 91-92, K98, and Q120 each bind FMN; these read RSVLCK and FT. Y138 and R142 together coordinate substrate. FMN-binding positions include 155–156 and W201; that span reads QS. 207–209 is a binding site for substrate; sequence RMH. FMN is bound at residue R211.

It belongs to the pyridoxamine 5'-phosphate oxidase family. In terms of assembly, homodimer. The cofactor is FMN.

The catalysed reaction is pyridoxamine 5'-phosphate + O2 + H2O = pyridoxal 5'-phosphate + H2O2 + NH4(+). The enzyme catalyses pyridoxine 5'-phosphate + O2 = pyridoxal 5'-phosphate + H2O2. Its pathway is cofactor metabolism; pyridoxal 5'-phosphate salvage; pyridoxal 5'-phosphate from pyridoxamine 5'-phosphate: step 1/1. The protein operates within cofactor metabolism; pyridoxal 5'-phosphate salvage; pyridoxal 5'-phosphate from pyridoxine 5'-phosphate: step 1/1. In terms of biological role, catalyzes the oxidation of either pyridoxine 5'-phosphate (PNP) or pyridoxamine 5'-phosphate (PMP) into pyridoxal 5'-phosphate (PLP). The protein is Pyridoxine/pyridoxamine 5'-phosphate oxidase of Mycobacterium bovis (strain ATCC BAA-935 / AF2122/97).